Here is a 327-residue protein sequence, read N- to C-terminus: METKTVAITMGDPAGIGPEIIVKALSEDGLNGAPLVVIGCLATLKRLQAKGITPNVELRAIERVAEARFAPGIIHVIDEPLAQPEALEAGKVQAQAGDLAYRCVKRATELALRGDVQAIATAPLNKEALHLAGHNYPGHTELLATLTHSRDYAMVLYTDKLKVIHVSTHIALRKFLDTLSTARVETVIGIADTFLKRVGYVKPRIAVAGVNPHAGENGLFGDEETRILTPAITDARAKGMDVYGPCPPDTVFLQAYEGQYDMVVAMYHDQGHIPLKLLGFYDGVNITAGLPFIRTSADHGTAFDIAWTGKAKSESMAVSIKLAMQLA.

Substrate is bound by residues His-139 and Thr-140. A divalent metal cation-binding residues include His-169, His-213, and His-268. Residues Lys-276, Asn-285, and Arg-294 each contribute to the substrate site.

It belongs to the PdxA family. PdxA2 subfamily. In terms of assembly, homodimer. Requires a divalent metal cation as cofactor.

It carries out the reaction 4-O-phospho-D-threonate + NAD(+) = dihydroxyacetone phosphate + CO2 + NADH. Catalyzes the NAD-dependent oxidation and subsequent decarboxylation of D-threonate 4-phosphate to produce dihydroxyacetone phosphate (DHAP). Can also use 4-hydroxy-L-threonine 4-phosphate as substrate. In Salmonella typhimurium (strain LT2 / SGSC1412 / ATCC 700720), this protein is D-threonate 4-phosphate dehydrogenase.